We begin with the raw amino-acid sequence, 464 residues long: Fumarate hydratase class II (464 aa).

Residues 98–100, 129–132, 139–141, and T187 each bind substrate; these read SGT, HPND, and SSN. H188 serves as the catalytic Proton donor/acceptor. Residue S318 is part of the active site. Substrate contacts are provided by residues S319 and 324–326; that span reads KVN.

This sequence belongs to the class-II fumarase/aspartase family. Fumarase subfamily. Homotetramer.

It localises to the cytoplasm. It catalyses the reaction (S)-malate = fumarate + H2O. Its pathway is carbohydrate metabolism; tricarboxylic acid cycle; (S)-malate from fumarate: step 1/1. In terms of biological role, involved in the TCA cycle. Catalyzes the stereospecific interconversion of fumarate to L-malate. The polypeptide is Fumarate hydratase class II (Haemophilus influenzae (strain ATCC 51907 / DSM 11121 / KW20 / Rd)).